We begin with the raw amino-acid sequence, 440 residues long: FAD-dependent monooxygenase afoD (440 aa).

Residues 10 to 30 (PLSIAIIGGGIIGLMTALGLL) form a helical membrane-spanning segment. FAD contacts are provided by E41, L145, and D320. N352 carries an N-linked (GlcNAc...) asparagine glycan.

Belongs to the paxM FAD-dependent monooxygenase family. FAD serves as cofactor.

It is found in the membrane. FAD-dependent monooxygenase; part of the gene cluster that mediates the biosynthesis of asperfuranone, a probable antitumor agent. The polyketide synthase afoG is responsible for producing the 3,5-dimethyloctadienone moiety from acetyl-CoA, three malonyl-CoA, and two S-adenosyl methionines (SAM). The 3,5-dimethyloctadienone moiety is then loaded onto the SAT domain of afoE and extended with four malonyl-CoA and one SAM, which leads to the formation of 2,4-dihydroxy-6-(5,7-dimethyl-2-oxo-trans-3-trans-5-nonadienyl)-3-methylbenzaldehyde (compound 2) after reductive release and aldol condensation. AfoD is the next enzyme in the biosynthesis sequence and hydroxylates the side chain at the benzylic position of compound 2. After benzylic hydroxylation, a furan ring is formed after five-member ring hemiacetal formation and water elimination. AfoF and afoC are proposed to oxidize the R-diketone proton and to reduce the unconjugated carbonyl group, respectively, to generate asperfuranone. Since no intermediates could be isolated from afoF and afoC deletants, the sequence of these two enzymes is not fully understood. Moreover, since afoC deletant still produces a small amount of asperfuranone, other endogenous oxidoreductases might catalyze the same reaction with much less efficiency. The chain is FAD-dependent monooxygenase afoD from Emericella nidulans (strain FGSC A4 / ATCC 38163 / CBS 112.46 / NRRL 194 / M139) (Aspergillus nidulans).